The primary structure comprises 465 residues: A-type ATP synthase subunit B (465 aa).

Belongs to the ATPase alpha/beta chains family. In terms of assembly, has multiple subunits with at least A(3), B(3), C, D, E, F, H, I and proteolipid K(x).

It is found in the cell membrane. Component of the A-type ATP synthase that produces ATP from ADP in the presence of a proton gradient across the membrane. The B chain is a regulatory subunit. This is A-type ATP synthase subunit B from Pyrococcus horikoshii (strain ATCC 700860 / DSM 12428 / JCM 9974 / NBRC 100139 / OT-3).